The primary structure comprises 231 residues: MGMAKLTKKQKMFAEKVDSLKSYDALEGFSLVSELATAKFSESIDVAIKLGIDPRKSDQVVRGATVMPNGTGKDVRVAVFTGDANAAAAKEAGAEFVGMDDLAAEVKGGMMDFDVVIASPDAMRVVGMLGQVLGPRGLMPNPKTGTVTPDVVTAIKNAKSGQVRFRADKAGIVHASIGKVDFAPEKLKENLNALIEDLNKAKPAAAKGTYMKKVSISSTMGPGIVLDQSSL.

Belongs to the universal ribosomal protein uL1 family. As to quaternary structure, part of the 50S ribosomal subunit.

Functionally, binds directly to 23S rRNA. The L1 stalk is quite mobile in the ribosome, and is involved in E site tRNA release. In terms of biological role, protein L1 is also a translational repressor protein, it controls the translation of the L11 operon by binding to its mRNA. The chain is Large ribosomal subunit protein uL1 from Hydrogenovibrio crunogenus (strain DSM 25203 / XCL-2) (Thiomicrospira crunogena).